We begin with the raw amino-acid sequence, 314 residues long: Olfactory receptor 5G3 (314 aa).

The Extracellular portion of the chain corresponds to 1–24 (MEDKNQTVVTEFLLLGLTDHPYQK). N-linked (GlcNAc...) asparagine glycosylation occurs at N5. A helical membrane pass occupies residues 25–45 (IVLFFMFLFVYLITLGGNLGM). At 46-97 (ITLIWIDPRLHTPMYFFLRHLSFVDICSSSSVVPKMLCNIFAEKKDITFLGC) the chain is on the cytoplasmic side. C97 and C179 form a disulfide bridge. A helical transmembrane segment spans residues 98–118 (AAQMWFFGLFEAAECFLLAAM). At 119-143 (AYDRYVAICKPLLYTLIMSQQVCMQ) the chain is on the extracellular side. Residues 144–164 (LVVGPYAMALISTMTHTIFTF) form a helical membrane-spanning segment. At 165–167 (CLP) the chain is on the cytoplasmic side. A helical transmembrane segment spans residues 168 to 188 (FCGSNIINHFFCDIFPLLSLA). The Extracellular portion of the chain corresponds to 189–196 (CADTWVNK). A helical transmembrane segment spans residues 197 to 217 (FVLFVLAGAIGVLSGLIIMVS). Residues 218-237 (YICILMTILKIQTADGKQKA) lie on the Cytoplasmic side of the membrane. The helical transmembrane segment at 238–258 (FFTCFSHLAAVSILYGTLFLI) threads the bilayer. At 259–268 (YVRPSSSSSL) the chain is on the extracellular side. The chain crosses the membrane as a helical span at residues 269 to 289 (GIYKVISLFYTVVIPMVNPLI). Topologically, residues 290–314 (YSLRNKEVKDAFRRKIERKKFIIGR) are cytoplasmic.

It belongs to the G-protein coupled receptor 1 family.

The protein localises to the cell membrane. Odorant receptor. In Homo sapiens (Human), this protein is Olfactory receptor 5G3 (OR5G3).